The following is a 426-amino-acid chain: Cell adhesion molecule CEACAM16 (426 aa).

The N-terminal stretch at 1–22 is a signal peptide; that stretch reads MKMPLTWYSWFLLSAWILNTGA. N-linked (GlcNAc...) asparagine glycosylation occurs at Asn-38. The interval 77 to 96 is disordered; it reads ETPGPAHTGREAVRPDGSLD. Basic and acidic residues predominate over residues 84-95; sequence TGREAVRPDGSL. 2 Ig-like C2-type domains span residues 134–219 and 224–310; these read PPTV…LNLT and PERV…ASVV. An intrachain disulfide couples Cys-155 to Cys-202. The N-linked (GlcNAc...) asparagine glycan is linked to Asn-217. Cys-253 and Cys-294 are joined by a disulfide.

This sequence belongs to the immunoglobulin superfamily. CEA family. Homooligomer; can for homodimers and homotetramers. Interacts with TECTA and TECTB. Expressed in cochlear outer hair cells (OHC).

It localises to the secreted. Its function is as follows. Required for proper hearing, plays a role in maintaining the integrity of the tectorial membrane. In Mus musculus (Mouse), this protein is Cell adhesion molecule CEACAM16.